Reading from the N-terminus, the 244-residue chain is Probable septum site-determining protein MinC (244 aa).

Belongs to the MinC family. As to quaternary structure, interacts with MinD and FtsZ.

In terms of biological role, cell division inhibitor that blocks the formation of polar Z ring septums. Rapidly oscillates between the poles of the cell to destabilize FtsZ filaments that have formed before they mature into polar Z rings. Prevents FtsZ polymerization. The polypeptide is Probable septum site-determining protein MinC (Dichelobacter nodosus (strain VCS1703A)).